A 1184-amino-acid chain; its full sequence is uncharacterized protein (1184 aa).

Disordered regions lie at residues 115–152 (ETSS…AHVS) and 397–426 (TYKP…VPER). Polar residues-rich tracts occupy residues 137-152 (HVMN…AHVS) and 397-421 (TYKP…TSHN). Ser-686 carries the phosphoserine modification. Composition is skewed to basic and acidic residues over residues 705 to 767 (LSER…ESAH), 783 to 792 (FEHETEPSHY), 849 to 863 (SHAH…RDLG), and 891 to 902 (YLHDEKTRDTLT). 2 disordered regions span residues 705-870 (LSER…FGDV) and 890-1017 (DYLH…SSPK). A Phosphoserine modification is found at Ser-905. The span at 920-932 (EDHPHASEAERAH) shows a compositional bias: basic and acidic residues. The span at 941–950 (SSESSPESQS) shows a compositional bias: low complexity. Over residues 999 to 1011 (PRERLDDNAKEIL) the composition is skewed to basic and acidic residues. Phosphoserine is present on Ser-1018. Disordered regions lie at residues 1029-1107 (NRKD…IGTQ) and 1135-1154 (DVDN…KSRP). Positions 1032-1045 (DKAAVKRMLEEDSS) are enriched in basic and acidic residues. Positions 1073 to 1107 (PAVNNSTKPVAVTSKNGHSRNGSHAAHSNNVIGTQ) are enriched in polar residues. Residues 1138-1150 (NVVSGHSNVNGVS) are compositionally biased toward low complexity.

The protein resides in the cytoplasm. This is an uncharacterized protein from Schizosaccharomyces pombe (strain 972 / ATCC 24843) (Fission yeast).